Consider the following 312-residue polypeptide: Glyoxylate/hydroxypyruvate reductase A (312 aa).

Arginine 227 is a catalytic residue. Histidine 275 (proton donor) is an active-site residue.

Belongs to the D-isomer specific 2-hydroxyacid dehydrogenase family. GhrA subfamily.

It localises to the cytoplasm. It catalyses the reaction glycolate + NADP(+) = glyoxylate + NADPH + H(+). The enzyme catalyses (R)-glycerate + NAD(+) = 3-hydroxypyruvate + NADH + H(+). The catalysed reaction is (R)-glycerate + NADP(+) = 3-hydroxypyruvate + NADPH + H(+). Catalyzes the NADPH-dependent reduction of glyoxylate and hydroxypyruvate into glycolate and glycerate, respectively. In Escherichia coli (strain ATCC 8739 / DSM 1576 / NBRC 3972 / NCIMB 8545 / WDCM 00012 / Crooks), this protein is Glyoxylate/hydroxypyruvate reductase A.